A 424-amino-acid chain; its full sequence is MTNKKAFKETCKFIAGGVNSPVRAFANVQSEPKFISHGKGAYIFDIDGNSYIDYVQSWGPLLFGHCDKDIQKACQKALHKGSSFGAPTLLETELAKLVLSDFPHLEKIRFVSSGTEATMSAIRLARGFTKKDKILKFEGCYHGHSDSLLVSAGSGAATFNSPSSLGVLEDVAKHTLVAKYNDINSVKELFEKNKDIACVIIEPIAGNMGLVPAKQDFLEELAKICKNNQTLLIFDEVMSGYRASYLGSYGINHIQADIITFGKVIGGGLPAAAFASRAEIMDILSPLGGVYQAGTLSGNPLAMAAGIASLTKAKKKTKLYDKLGKLAKKLTQGMKKLADEKGLPLQACHVGSMFGYFFTKDPVSNYQDALKSDLALFSKFHKNMLENGIYLAPSQFETGFICSKMDDKIIDTTLEAVRESFKRI.

K263 carries the post-translational modification N6-(pyridoxal phosphate)lysine.

It belongs to the class-III pyridoxal-phosphate-dependent aminotransferase family. HemL subfamily. As to quaternary structure, homodimer. Pyridoxal 5'-phosphate is required as a cofactor.

The protein resides in the cytoplasm. It carries out the reaction (S)-4-amino-5-oxopentanoate = 5-aminolevulinate. It participates in porphyrin-containing compound metabolism; protoporphyrin-IX biosynthesis; 5-aminolevulinate from L-glutamyl-tRNA(Glu): step 2/2. This chain is Glutamate-1-semialdehyde 2,1-aminomutase, found in Campylobacter jejuni subsp. jejuni serotype O:2 (strain ATCC 700819 / NCTC 11168).